The chain runs to 623 residues: UvrABC system protein C (623 aa).

The GIY-YIG domain maps to 13–92 (DKPGVYIMKN…IKKYKPRYNI (80 aa)). Positions 204–239 (NDIIRELKEEMEKASMNLDFEKAADLRDKMLAAQKV) constitute a UVR domain.

This sequence belongs to the UvrC family. In terms of assembly, interacts with UvrB in an incision complex.

The protein resides in the cytoplasm. Functionally, the UvrABC repair system catalyzes the recognition and processing of DNA lesions. UvrC both incises the 5' and 3' sides of the lesion. The N-terminal half is responsible for the 3' incision and the C-terminal half is responsible for the 5' incision. The polypeptide is UvrABC system protein C (Clostridium acetobutylicum (strain ATCC 824 / DSM 792 / JCM 1419 / IAM 19013 / LMG 5710 / NBRC 13948 / NRRL B-527 / VKM B-1787 / 2291 / W)).